The sequence spans 458 residues: Vasoactive intestinal polypeptide receptor 1 (458 aa).

Residues 1 to 31 form the signal peptide; sequence MRPLSPPPAGWFCVLAGVLACVLGPVGSWAV. Residues 32–142 are Extracellular-facing; that stretch reads GLQQEECDYL…DEQQTVFYNS (111 aa). Disulfide bonds link Cys-38/Cys-209, Cys-51/Cys-73, Cys-64/Cys-106, Cys-87/Cys-123, and Cys-216/Cys-286. Asn-59, Asn-70, Asn-101, and Asn-105 each carry an N-linked (GlcNAc...) asparagine glycan. The chain crosses the membrane as a helical span at residues 143–167; that stretch reads VKTGYTIGYSLSLAALLVATAILSL. The Cytoplasmic segment spans residues 168 to 175; sequence FRKLHCTR. Residues 176–197 form a helical membrane-spanning segment; that stretch reads NYIHMHLFISFILRATAVFIKD. The Extracellular segment spans residues 198–217; sequence LALFDSEESDHCSKGSVGCK. Residues 218-242 form a helical membrane-spanning segment; it reads AAVVLFQYCVMANFFWLLVEGLYLH. Topologically, residues 243–255 are cytoplasmic; it reads TLLAVSFFSERKY. Residues 256–277 traverse the membrane as a helical segment; it reads FWGYIFVGWGVPSTFIMVWTVV. At 278 to 292 the chain is on the extracellular side; the sequence is RIHFEDYGCWDTIHS. The chain crosses the membrane as a helical span at residues 293 to 317; that stretch reads SLWWIIKAPILASILVNFILFIRII. The Cytoplasmic segment spans residues 318-339; it reads GILVQKLRPPDVGKSDNSPYSR. Residues 340–360 traverse the membrane as a helical segment; sequence LAKSTLLLIPLFGVHYIMFAF. The Extracellular portion of the chain corresponds to 361–368; that stretch reads FPDNFKAE. The helical transmembrane segment at 369–392 threads the bilayer; sequence VKMVFELIVGSFQGCVVAILYCFL. Residues 393–458 are Cytoplasmic-facing; it reads NGEVQAELRR…SSFQAEVSLV (66 aa).

Belongs to the G-protein coupled receptor 2 family. Interacts with ADCYAP1/PACAP; activated by both PACAP27 and PACAP38 neuropeptides. Interacts with VIP; the interaction results in VIPR1 activation.

Its subcellular location is the cell membrane. Functionally, g protein-coupled receptor activated by the neuropeptides vasoactive intestinal peptide (VIP) and pituitary adenylate cyclase-activating polypeptide (ADCYAP1/PACAP). Binds VIP and both PACAP27 and PACAP38 bioactive peptides with the following order of ligand affinity VIP = PACAP27 &gt; PACAP38. Ligand binding causes a conformation change that triggers signaling via guanine nucleotide-binding proteins (G proteins) and modulates the activity of downstream effectors. Activates cAMP-dependent pathway. The polypeptide is Vasoactive intestinal polypeptide receptor 1 (VIPR1) (Sus scrofa (Pig)).